The following is a 341-amino-acid chain: Anthranilate phosphoribosyltransferase (341 aa).

5-phospho-alpha-D-ribose 1-diphosphate-binding positions include Gly-84, 87 to 88, Thr-92, 94 to 97, 112 to 120, and Ser-124; these read GD, NIST, and KHGNRSVSS. An anthranilate-binding site is contributed by Gly-84. Ser-96 is a binding site for Mg(2+). Asn-115 contacts anthranilate. Residue Arg-170 participates in anthranilate binding. Mg(2+)-binding residues include Asp-229 and Glu-230.

This sequence belongs to the anthranilate phosphoribosyltransferase family. Homodimer. Mg(2+) serves as cofactor.

It catalyses the reaction N-(5-phospho-beta-D-ribosyl)anthranilate + diphosphate = 5-phospho-alpha-D-ribose 1-diphosphate + anthranilate. It functions in the pathway amino-acid biosynthesis; L-tryptophan biosynthesis; L-tryptophan from chorismate: step 2/5. Catalyzes the transfer of the phosphoribosyl group of 5-phosphorylribose-1-pyrophosphate (PRPP) to anthranilate to yield N-(5'-phosphoribosyl)-anthranilate (PRA). In Polynucleobacter asymbioticus (strain DSM 18221 / CIP 109841 / QLW-P1DMWA-1) (Polynucleobacter necessarius subsp. asymbioticus), this protein is Anthranilate phosphoribosyltransferase.